We begin with the raw amino-acid sequence, 246 residues long: 14-3-3 protein beta/alpha (246 aa).

The residue at position 1 (M1) is an N-acetylmethionine. Position 2 is an N-acetylthreonine; in 14-3-3 protein beta/alpha, N-terminally processed (T2). Position 2 is a phosphothreonine (T2). An N6-acetyllysine modification is found at K5. At K51 the chain carries N6-acetyllysine; alternate. K51 is covalently cross-linked (Glycyl lysine isopeptide (Lys-Gly) (interchain with G-Cter in SUMO2); alternate). S60 carries the post-translational modification Phosphoserine. An N6-acetyllysine modification is found at K70. Residues Y84 and Y106 each carry the 3'-nitrotyrosine modification. N6-acetyllysine is present on K117. 2 positions are modified to phosphoserine: S186 and S232.

The protein belongs to the 14-3-3 family. In terms of assembly, homodimer. Interacts with SAMSN1 and PRKCE. Interacts with AKAP13. Interacts with SSH1 and TORC2/CRTC2. Interacts with ABL1; the interaction results in cytoplasmic location of ABL1 and inhibition of cABL-mediated apoptosis. Interacts with ROR2 (dimer); the interaction results in phosphorylation of YWHAB on tyrosine residues. Interacts with GAB2. Interacts with YAP1 (phosphorylated form). Interacts with the phosphorylated (by AKT1) form of SRPK2. Interacts with PKA-phosphorylated AANAT. Interacts with MYO1C. Interacts with SIRT2. Interacts with the 'Thr-369' phosphorylated form of DAPK2. Interacts with PI4KB, TBC1D22A and TBC1D22B. Interacts with the 'Ser-1134' and 'Ser-1161' phosphorylated form of SOS1. Interacts (via phosphorylated form) with YWHAB; this interaction occurs in a protein kinase AKT1-dependent manner. Interacts with SLITRK1. Interacts with SYNPO2 (phosphorylated form); YWHAB competes with ACTN2 for interaction with SYNPO2. Interacts with RIPOR2 (via phosphorylated form); this interaction occurs in a chemokine-dependent manner and does not compete for binding of RIPOR2 with RHOA nor blocks inhibition of RIPOR2-mediated RHOA activity. Interacts with MARK2 and MARK3. Interacts with TESK1; the interaction is dependent on the phosphorylation of TESK1 'Ser-439' and inhibits TESK1 kinase activity. Interacts with MEFV. Interacts with HDAC4. Interacts with ADAM22 (via C-terminus). The alpha, brain-specific form differs from the beta form in being phosphorylated. Phosphorylated on Ser-60 by protein kinase C delta type catalytic subunit in a sphingosine-dependent fashion. In terms of processing, isoform Short contains a N-acetylmethionine at position 1.

The protein resides in the cytoplasm. The protein localises to the melanosome. In terms of biological role, adapter protein implicated in the regulation of a large spectrum of both general and specialized signaling pathways. Binds to a large number of partners, usually by recognition of a phosphoserine or phosphothreonine motif. Binding generally results in the modulation of the activity of the binding partner. Negative regulator of osteogenesis. Blocks the nuclear translocation of the phosphorylated form (by AKT1) of SRPK2 and antagonizes its stimulatory effect on cyclin D1 expression resulting in blockage of neuronal apoptosis elicited by SRPK2. Negative regulator of signaling cascades that mediate activation of MAP kinases via AKAP13. The chain is 14-3-3 protein beta/alpha (Ywhab) from Rattus norvegicus (Rat).